Consider the following 262-residue polypeptide: Zinc import ATP-binding protein ZnuC (262 aa).

Positions Val5–Ala220 constitute an ABC transporter domain. Residue Gly37 to Ser44 participates in ATP binding. The interval His236 to Asp262 is disordered.

The protein belongs to the ABC transporter superfamily. Zinc importer (TC 3.A.1.15.5) family. As to quaternary structure, the complex is composed of two ATP-binding proteins (ZnuC), two transmembrane proteins (ZnuB) and a solute-binding protein (ZnuA).

It localises to the cell inner membrane. The catalysed reaction is Zn(2+)(out) + ATP(in) + H2O(in) = Zn(2+)(in) + ADP(in) + phosphate(in) + H(+)(in). Part of the ABC transporter complex ZnuABC involved in zinc import. Responsible for energy coupling to the transport system. The protein is Zinc import ATP-binding protein ZnuC of Vibrio parahaemolyticus serotype O3:K6 (strain RIMD 2210633).